Here is a 342-residue protein sequence, read N- to C-terminus: Anthranilate phosphoribosyltransferase (342 aa).

5-phospho-alpha-D-ribose 1-diphosphate contacts are provided by residues glycine 81, 84–85, threonine 89, 91–94, 109–117, and alanine 121; these read GD, NVST, and KHGNRAASS. Position 81 (glycine 81) interacts with anthranilate. Serine 93 contributes to the Mg(2+) binding site. Asparagine 112 is an anthranilate binding site. An anthranilate-binding site is contributed by arginine 167. The Mg(2+) site is built by aspartate 226 and glutamate 227.

Belongs to the anthranilate phosphoribosyltransferase family. In terms of assembly, homodimer. Mg(2+) serves as cofactor.

The enzyme catalyses N-(5-phospho-beta-D-ribosyl)anthranilate + diphosphate = 5-phospho-alpha-D-ribose 1-diphosphate + anthranilate. Its pathway is amino-acid biosynthesis; L-tryptophan biosynthesis; L-tryptophan from chorismate: step 2/5. Catalyzes the transfer of the phosphoribosyl group of 5-phosphorylribose-1-pyrophosphate (PRPP) to anthranilate to yield N-(5'-phosphoribosyl)-anthranilate (PRA). The protein is Anthranilate phosphoribosyltransferase of Beijerinckia indica subsp. indica (strain ATCC 9039 / DSM 1715 / NCIMB 8712).